Reading from the N-terminus, the 493-residue chain is Cytochrome P450 2E1 (493 aa).

298–303 (FAGTET) provides a ligand contact to substrate. Residue Cys437 coordinates heme.

The protein belongs to the cytochrome P450 family. Interacts with chaperones HSP70 and HSP90; this interaction is required for initial targeting to mitochondria. Heme serves as cofactor.

The protein localises to the endoplasmic reticulum membrane. The protein resides in the microsome membrane. It localises to the mitochondrion inner membrane. It carries out the reaction an organic molecule + reduced [NADPH--hemoprotein reductase] + O2 = an alcohol + oxidized [NADPH--hemoprotein reductase] + H2O + H(+). The catalysed reaction is (5Z,8Z,11Z)-eicosatrienoate + reduced [NADPH--hemoprotein reductase] + O2 = 19-hydroxy-(5Z,8Z,11Z)-eicosatrienoate + oxidized [NADPH--hemoprotein reductase] + H2O + H(+). The enzyme catalyses (5Z,8Z,11Z,14Z,17Z)-eicosapentaenoate + reduced [NADPH--hemoprotein reductase] + O2 = 19-hydroxy-(5Z,8Z,11Z,14Z,17Z)-eicosapentaenoate + oxidized [NADPH--hemoprotein reductase] + H2O + H(+). It catalyses the reaction (4Z,7Z,10Z,13Z,16Z,19Z)-docosahexaenoate + reduced [NADPH--hemoprotein reductase] + O2 = 21-hydroxy-(4Z,7Z,10Z,13Z,16Z,19Z)-docosahexaenoate + oxidized [NADPH--hemoprotein reductase] + H2O + H(+). It carries out the reaction dodecanoate + reduced [NADPH--hemoprotein reductase] + O2 = 11-hydroxydodecanoate + oxidized [NADPH--hemoprotein reductase] + H2O + H(+). The catalysed reaction is tetradecanoate + reduced [NADPH--hemoprotein reductase] + O2 = 13-hydroxytetradecanoate + oxidized [NADPH--hemoprotein reductase] + H2O + H(+). The enzyme catalyses 4-nitrophenol + NADPH + O2 + H(+) = 4-nitrocatechol + NADP(+) + H2O. Its pathway is lipid metabolism; fatty acid metabolism. Its activity is regulated as follows. The omega-1 hydroxylase activity is stimulated by cytochrome b5. In terms of biological role, a cytochrome P450 monooxygenase involved in the metabolism of fatty acids. Mechanistically, uses molecular oxygen inserting one oxygen atom into a substrate, and reducing the second into a water molecule, with two electrons provided by NADPH via cytochrome P450 reductase (NADPH--hemoprotein reductase). Catalyzes the hydroxylation of carbon-hydrogen bonds. Hydroxylates fatty acids specifically at the omega-1 position displaying the highest catalytic activity for saturated fatty acids. May be involved in the oxidative metabolism of xenobiotics. This Rattus norvegicus (Rat) protein is Cytochrome P450 2E1.